We begin with the raw amino-acid sequence, 316 residues long: Polyprenyl transferase prhE (316 aa).

The next 9 membrane-spanning stretches (helical) occupy residues 45 to 65, 69 to 89, 114 to 134, 135 to 155, 163 to 183, 188 to 208, 231 to 253, 257 to 276, and 296 to 316; these read VVGVAYTAAISPVTLPSTFLL, VILSLWGFCIRSAGCAWNDLI, GAALLAAFMFGCGGSLLLLLP, SQCAFEAAIVVFFALLYPFGK, LILTNIAWAIPMAMSSLDMSP, IPTLAMSFSIASVIVMIDIVY, ITDQIAYGLFFSGTLSLLVGGIL, GFPFLIFSVGGHFLGFLRFL, and SCLLATMLLVFGLCFEYCVRL.

This sequence belongs to the UbiA prenyltransferase family. The cofactor is Mg(2+).

The protein resides in the membrane. It catalyses the reaction 3,5-dimethylorsellinate + (2E,6E)-farnesyl diphosphate = (3R)-3-farnesyl-6-hydroxy-2,3,5-trimethyl-4-oxocyclohexa-1,5-diene-1-carboxylate + diphosphate + H(+). It functions in the pathway secondary metabolite biosynthesis; terpenoid biosynthesis. Its function is as follows. Polyprenyl transferase; part of the gene cluster that mediates the biosynthesis of paraherquonin, a meroterpenoid with a unique, highly congested hexacyclic molecular architecture. The first step of the pathway is the synthesis of 3,5-dimethylorsellinic acid (DMOA) by the polyketide synthase prhL. Synthesis of DMOA is followed by farnesylation by the prenyltransferase prhE, methylesterification by the methyl-transferase prhM, epoxidation of the prenyl chain by the flavin-dependent monooxygenase prhF, and cyclization of the farnesyl moiety by the terpene cyclase prhH, to yield the tetracyclic intermediate, protoaustinoid A. The short chain dehydrogenase prhI then oxidizes the C-3 alcohol group of the terpene cyclase product to transform protoaustinoid A into protoaustinoid B. The FAD-binding monooxygenase prhJ catalyzes the oxidation of protoaustinoid B into preaustinoid A which is further oxidized into preaustinoid A1 by FAD-binding monooxygenase phrK. Finally, prhA leads to berkeleydione via the berkeleyone B intermediate. PrhA is a multifunctional dioxygenase that first desaturates at C5-C6 to form berkeleyone B, followed by rearrangement of the A/B-ring to form the cycloheptadiene moiety in berkeleydione. Berkeleydione serves as the key intermediate for the biosynthesis of paraherquonin as well as many other meroterpenoids. The cytochrome P450 monooxygenases prhB, prhD, and prhN, as well as the isomerase prhC, are probably involved in the late stage of paraherquonin biosynthesis, after the production of berkeleydione. Especially prhC might be a multifunctional enzyme that catalyzes the D-ring expansion via intramolecular methoxy rearrangement, as well as the hydrolysis of the expanded D-ring. This Penicillium brasilianum protein is Polyprenyl transferase prhE.